A 208-amino-acid chain; its full sequence is UPF0637 protein BCAH820_3975 (208 aa).

This sequence belongs to the UPF0637 family.

This chain is UPF0637 protein BCAH820_3975, found in Bacillus cereus (strain AH820).